Here is a 306-residue protein sequence, read N- to C-terminus: 4-hydroxy-3-methylbut-2-enyl diphosphate reductase 1 (306 aa).

C10 serves as a coordination point for [4Fe-4S] cluster. Residues H39 and H72 each coordinate (2E)-4-hydroxy-3-methylbut-2-enyl diphosphate. Positions 39 and 72 each coordinate dimethylallyl diphosphate. 2 residues coordinate isopentenyl diphosphate: H39 and H72. C94 contributes to the [4Fe-4S] cluster binding site. H122 contacts (2E)-4-hydroxy-3-methylbut-2-enyl diphosphate. Residue H122 coordinates dimethylallyl diphosphate. H122 provides a ligand contact to isopentenyl diphosphate. E124 acts as the Proton donor in catalysis. T162 contributes to the (2E)-4-hydroxy-3-methylbut-2-enyl diphosphate binding site. A [4Fe-4S] cluster-binding site is contributed by C192. Residues S220, S221, N222, and S264 each contribute to the (2E)-4-hydroxy-3-methylbut-2-enyl diphosphate site. Residues S220, S221, N222, and S264 each coordinate dimethylallyl diphosphate. S220, S221, N222, and S264 together coordinate isopentenyl diphosphate.

The protein belongs to the IspH family. [4Fe-4S] cluster is required as a cofactor.

The enzyme catalyses isopentenyl diphosphate + 2 oxidized [2Fe-2S]-[ferredoxin] + H2O = (2E)-4-hydroxy-3-methylbut-2-enyl diphosphate + 2 reduced [2Fe-2S]-[ferredoxin] + 2 H(+). The catalysed reaction is dimethylallyl diphosphate + 2 oxidized [2Fe-2S]-[ferredoxin] + H2O = (2E)-4-hydroxy-3-methylbut-2-enyl diphosphate + 2 reduced [2Fe-2S]-[ferredoxin] + 2 H(+). The protein operates within isoprenoid biosynthesis; dimethylallyl diphosphate biosynthesis; dimethylallyl diphosphate from (2E)-4-hydroxy-3-methylbutenyl diphosphate: step 1/1. It participates in isoprenoid biosynthesis; isopentenyl diphosphate biosynthesis via DXP pathway; isopentenyl diphosphate from 1-deoxy-D-xylulose 5-phosphate: step 6/6. Catalyzes the conversion of 1-hydroxy-2-methyl-2-(E)-butenyl 4-diphosphate (HMBPP) into a mixture of isopentenyl diphosphate (IPP) and dimethylallyl diphosphate (DMAPP). Acts in the terminal step of the DOXP/MEP pathway for isoprenoid precursor biosynthesis. This is 4-hydroxy-3-methylbut-2-enyl diphosphate reductase 1 from Rhodopseudomonas palustris (strain ATCC BAA-98 / CGA009).